The chain runs to 339 residues: Tetraacyldisaccharide 4'-kinase (339 aa).

An ATP-binding site is contributed by 62–69 (VAGGTGKT).

This sequence belongs to the LpxK family.

It carries out the reaction a lipid A disaccharide + ATP = a lipid IVA + ADP + H(+). Its pathway is glycolipid biosynthesis; lipid IV(A) biosynthesis; lipid IV(A) from (3R)-3-hydroxytetradecanoyl-[acyl-carrier-protein] and UDP-N-acetyl-alpha-D-glucosamine: step 6/6. In terms of biological role, transfers the gamma-phosphate of ATP to the 4'-position of a tetraacyldisaccharide 1-phosphate intermediate (termed DS-1-P) to form tetraacyldisaccharide 1,4'-bis-phosphate (lipid IVA). This Xylella fastidiosa (strain M23) protein is Tetraacyldisaccharide 4'-kinase.